The primary structure comprises 150 residues: MVLCFPLLLLLLVLWGPVCLLHAWPKHLTRAHWFEIQHIQPSPLQCNRAMSGINNYTQHCKHQNTFLHDSFQNVAAVCDLLSIICKNRQHNCHQSSKPVNMTDCRLTSGKYPQCRYSAAAQYKFFIVACDPPQKGDPPYKLVPVHLDSIL.

The N-terminal stretch at 1–23 (MVLCFPLLLLLLVLWGPVCLLHA) is a signal peptide. His-38 acts as the Proton acceptor in catalysis. Intrachain disulfides connect Cys-46-Cys-104, Cys-60-Cys-114, Cys-78-Cys-129, and Cys-85-Cys-92. An N-linked (GlcNAc...) asparagine glycan is attached at Asn-55. Residues 61 to 65 (KHQNT) and Lys-86 contribute to the substrate site. Asn-100 carries N-linked (GlcNAc...) asparagine glycosylation. Arg-105 contacts substrate. His-145 (proton donor) is an active-site residue.

Belongs to the pancreatic ribonuclease family. As to quaternary structure, interacts (via N-terminus) with bacterial lipopolysaccharide (LPS).

It is found in the secreted. It localises to the lysosome. The protein localises to the cytoplasmic granule. Functionally, ribonuclease which shows a preference for the pyrimidines uridine and cytosine. Has potent antibacterial activity against a range of Gram-positive and Gram-negative bacteria, including P.aeruginosa, A.baumanii, M.luteus, S.aureus, E.faecalis, E.faecium, S.saprophyticus and E.coli. Causes loss of bacterial membrane integrity, and also promotes agglutination of Gram-negative bacteria. Probably contributes to urinary tract sterility. Bactericidal activity is independent of RNase activity. In Macaca mulatta (Rhesus macaque), this protein is Ribonuclease K6 (RNASE6).